We begin with the raw amino-acid sequence, 227 residues long: MGQLGALLHLVDPTLPIGGFNHSNGLETFVQQGKVNSRASLEEYVQTQLMQNWIYNDGAYLSLAFDAMANHDLGRLLQLDQELAASKIARESREGSYKLGVRLLKIFIRYENHPLLSEFQQAVSEKRCQGYFPIVFAMVAQAMNLDKAETLYAFYYNAAVGVVTNGVKLVPLSQMDGQDILFALRTPLAQAVENSLNPDLDWLGAATLASDIRSMQHEQLYTRLYMS.

This sequence belongs to the UreF family. In terms of assembly, ureD, UreF and UreG form a complex that acts as a GTP-hydrolysis-dependent molecular chaperone, activating the urease apoprotein by helping to assemble the nickel containing metallocenter of UreC. The UreE protein probably delivers the nickel.

The protein localises to the cytoplasm. In terms of biological role, required for maturation of urease via the functional incorporation of the urease nickel metallocenter. In Actinobacillus pleuropneumoniae serotype 3 (strain JL03), this protein is Urease accessory protein UreF.